The sequence spans 116 residues: Large ribosomal subunit protein uL23 (116 aa).

Belongs to the universal ribosomal protein uL23 family. In terms of assembly, part of the 50S ribosomal subunit. Contacts protein L29, and trigger factor when it is bound to the ribosome.

Functionally, one of the early assembly proteins it binds 23S rRNA. One of the proteins that surrounds the polypeptide exit tunnel on the outside of the ribosome. Forms the main docking site for trigger factor binding to the ribosome. The chain is Large ribosomal subunit protein uL23 from Psychrobacter sp. (strain PRwf-1).